Reading from the N-terminus, the 208-residue chain is V-type ATP synthase subunit E (208 aa).

Belongs to the V-ATPase E subunit family.

In terms of biological role, produces ATP from ADP in the presence of a proton gradient across the membrane. The protein is V-type ATP synthase subunit E of Chlamydia felis (strain Fe/C-56) (Chlamydophila felis).